A 109-amino-acid polypeptide reads, in one-letter code: Cytochrome c-550 (109 aa).

Positions 13, 16, 17, and 79 each coordinate heme c.

Binds 1 heme c group covalently per subunit.

This chain is Cytochrome c-550, found in Nitrobacter winogradskyi (Nitrobacter agilis).